We begin with the raw amino-acid sequence, 122 residues long: Large ribosomal subunit protein uL14 (122 aa).

It belongs to the universal ribosomal protein uL14 family. Part of the 50S ribosomal subunit. Forms a cluster with proteins L3 and L19. In the 70S ribosome, L14 and L19 interact and together make contacts with the 16S rRNA in bridges B5 and B8.

Its function is as follows. Binds to 23S rRNA. Forms part of two intersubunit bridges in the 70S ribosome. The protein is Large ribosomal subunit protein uL14 of Xylella fastidiosa (strain M23).